Reading from the N-terminus, the 201-residue chain is Mediator of RNA polymerase II transcription subunit 22 (201 aa).

Positions 93-123 (SVNESINQRNQQLRTLREECDKKLIALRDDI) form a coiled coil. The interval 182-201 (SQIHTPPHLNGHGAGMTEHT) is disordered.

The protein belongs to the Mediator complex subunit 22 family. As to quaternary structure, component of the Mediator complex.

The protein resides in the nucleus. Functionally, component of the Mediator complex, a coactivator involved in the regulated transcription of nearly all RNA polymerase II-dependent genes. Mediator functions as a bridge to convey information from gene-specific regulatory proteins to the basal RNA polymerase II transcription machinery. Mediator is recruited to promoters by direct interactions with regulatory proteins and serves as a scaffold for the assembly of a functional preinitiation complex with RNA polymerase II and the general transcription factors. In Xenopus laevis (African clawed frog), this protein is Mediator of RNA polymerase II transcription subunit 22 (med22).